The chain runs to 341 residues: UDP-N-acetyl-alpha-D-glucosaminouronate 4-epimerase (341 aa).

9 residues coordinate NAD(+): phenylalanine 27, isoleucine 28, aspartate 47, alanine 50, threonine 51, glycine 52, aspartate 78, isoleucine 79, and glutamine 98. Serine 103 contacts UDP-N-acetyl-alpha-D-galactosamine. Residue threonine 117 participates in NAD(+) binding. UDP-N-acetyl-alpha-D-galactosamine-binding residues include serine 142, serine 143, and tyrosine 166. 2 residues coordinate NAD(+): tyrosine 166 and lysine 170. The active-site Proton acceptor is the tyrosine 166. Asparagine 195 lines the UDP-N-acetyl-alpha-D-galactosamine pocket. Valine 196 serves as a coordination point for NAD(+). Residues valine 210, tyrosine 225, asparagine 227, arginine 234, arginine 299, and aspartate 302 each contribute to the UDP-N-acetyl-alpha-D-galactosamine site.

Belongs to the NAD(P)-dependent epimerase/dehydratase family. Homodimer. Requires NAD(+) as cofactor.

It carries out the reaction UDP-2-acetamido-2-deoxy-alpha-D-glucuronate = UDP-2-acetamido-2-deoxy-alpha-D-galacturonate. The catalysed reaction is UDP-N-acetyl-alpha-D-glucosamine = UDP-N-acetyl-alpha-D-galactosamine. It participates in bacterial outer membrane biogenesis; LPS O-antigen biosynthesis. Functionally, epimerase required for the biosynthesis of the B-band O antigen of serotype O6 lipopolysaccharide. Catalyzes the reversible epimerization of UDP-N-acetylglucosaminuronic acid (UDP-GlcNAcA) to UDP-N-acetylgalactosaminuronic acid (UDP-GalNAcA). Also catalyzes the reversible epimerization of UDP-N-acetylglucosamine (UDP-GlcNAc) to UDP-N-acetylgalactosamine (UDP-GalNAc). Has very low epimerase activity with UDP-glucose (UDP-Glc) and UDP-galactose (UDP-Gal). The sequence is that of UDP-N-acetyl-alpha-D-glucosaminouronate 4-epimerase from Pseudomonas aeruginosa.